Here is a 149-residue protein sequence, read N- to C-terminus: Active regulator of SIRT1 (149 aa).

The segment at 1-64 is disordered; sequence MSVSLLRKGL…GLRHDQKATA (64 aa). Basic and acidic residues predominate over residues 8-19; that stretch reads KGLDLLREERSG. Residues 30–41 show a composition bias toward low complexity; the sequence is SSKPKPCLSSSK. Residues 43 to 52 are compositionally biased toward basic residues; that stretch reads GMRKQLRRLK.

This sequence belongs to the AROS family. Part of the small subunit (SSU) processome, composed of more than 70 proteins and the RNA chaperone small nucleolar RNA (snoRNA) U3.

The protein resides in the nucleus. The protein localises to the nucleolus. Functionally, part of the small subunit (SSU) processome, first precursor of the small eukaryotic ribosomal subunit. During the assembly of the SSU processome in the nucleolus, many ribosome biogenesis factors, an RNA chaperone and ribosomal proteins associate with the nascent pre-rRNA and work in concert to generate RNA folding, modifications, rearrangements and cleavage as well as targeted degradation of pre-ribosomal RNA by the RNA exosome. Acts as a chaperone that specifically mediates the integration of RPS19 in state post-A1. Direct regulator of SIRT1. The sequence is that of Active regulator of SIRT1 (rps19bp1) from Xenopus tropicalis (Western clawed frog).